Reading from the N-terminus, the 461-residue chain is Photosystem II CP43 reaction center protein (461 aa).

Residues 1-2 constitute a propeptide that is removed on maturation; the sequence is ME. T3 is subject to N-acetylthreonine. Phosphothreonine is present on T3. The next 5 helical transmembrane spans lie at 57–81, 122–143, 166–188, 243–263, and 279–300; these read LFEV…PHLA, LLGP…KDRN, KALY…RKIT, KPFA…LSYS, and WFNN…ASQA. A [CaMn4O5] cluster-binding site is contributed by E355. The chain crosses the membrane as a helical span at residues 435-459; sequence RARAAAAGFEKGIDRDLEPVLSMTP.

This sequence belongs to the PsbB/PsbC family. PsbC subfamily. PSII is composed of 1 copy each of membrane proteins PsbA, PsbB, PsbC, PsbD, PsbE, PsbF, PsbH, PsbI, PsbJ, PsbK, PsbL, PsbM, PsbT, PsbX, PsbY, PsbZ, Psb30/Ycf12, at least 3 peripheral proteins of the oxygen-evolving complex and a large number of cofactors. It forms dimeric complexes. It depends on Binds multiple chlorophylls and provides some of the ligands for the Ca-4Mn-5O cluster of the oxygen-evolving complex. It may also provide a ligand for a Cl- that is required for oxygen evolution. PSII binds additional chlorophylls, carotenoids and specific lipids. as a cofactor.

It localises to the plastid. Its subcellular location is the chloroplast thylakoid membrane. Functionally, one of the components of the core complex of photosystem II (PSII). It binds chlorophyll and helps catalyze the primary light-induced photochemical processes of PSII. PSII is a light-driven water:plastoquinone oxidoreductase, using light energy to abstract electrons from H(2)O, generating O(2) and a proton gradient subsequently used for ATP formation. The sequence is that of Photosystem II CP43 reaction center protein from Ceratophyllum demersum (Rigid hornwort).